Consider the following 438-residue polypeptide: Protein maelstrom 1 (438 aa).

The segment at residues 2-69 is a DNA-binding region (HMG box); the sequence is APKKRNGFMT…LERTAKKERL (68 aa). The segment at 374-438 is disordered; sequence KEMGSRDLSP…NMGAGKKIAR (65 aa). Residues 381-391 show a composition bias toward polar residues; the sequence is LSPSSSHQSVS.

It belongs to the maelstrom family.

The protein resides in the cytoplasm. The protein localises to the nucleus. Functionally, involved both in the piRNA and miRNA metabolic processes. As a component of the meiotic nuage, plays a central role during oogenesis by repressing transposable elements and preventing their mobilization, which is essential for the germline integrity. Repression of transposable elements is mediated via the piRNA metabolic process, which mediates the repression of transposable elements during meiosis by forming complexes composed of piRNAs and Piwi proteins and governs the repression of transposons. As a nuclear component, it is required for proper differentiation in the germline stem cell (GSC) lineage by repressing microRNA-7 (miR-7), thereby acting as an indirect regulator of bag-of-marbles (Bam). Acts by binding to the promoter of miR-7 gene and repressing its expression; miR-7 repression alleviates the Bam repression by miR-7, thereby allowing differentiation in the germline stem cell (GSC) lineage. This chain is Protein maelstrom 1 (mael1), found in Drosophila persimilis (Fruit fly).